A 20-amino-acid chain; its full sequence is Manganese peroxidase H5 (20 aa).

The protein belongs to the peroxidase family. Ligninase subfamily.

It localises to the secreted. It carries out the reaction 2 Mn(2+) + H2O2 + 2 H(+) = 2 Mn(3+) + 2 H2O. Its function is as follows. Catalyzes the oxidation of Mn(2+) to Mn(3+). The latter, acting as a diffusible redox mediator, is capable of oxidizing a variety of lignin compounds. The polypeptide is Manganese peroxidase H5 (Phanerodontia chrysosporium (White-rot fungus)).